The primary structure comprises 143 residues: Nucleoside diphosphate kinase (143 aa).

ATP-binding residues include K11, F59, R87, T93, R104, and N114. The active-site Pros-phosphohistidine intermediate is the H117.

Belongs to the NDK family. As to quaternary structure, homotetramer. Mg(2+) serves as cofactor.

The protein resides in the cytoplasm. It carries out the reaction a 2'-deoxyribonucleoside 5'-diphosphate + ATP = a 2'-deoxyribonucleoside 5'-triphosphate + ADP. The catalysed reaction is a ribonucleoside 5'-diphosphate + ATP = a ribonucleoside 5'-triphosphate + ADP. Major role in the synthesis of nucleoside triphosphates other than ATP. The ATP gamma phosphate is transferred to the NDP beta phosphate via a ping-pong mechanism, using a phosphorylated active-site intermediate. This is Nucleoside diphosphate kinase from Shewanella amazonensis (strain ATCC BAA-1098 / SB2B).